The following is a 993-amino-acid chain: Glycogen phosphorylase 2 (993 aa).

Residues 1 to 82 (MEEKRSTNSP…SNQSEDPATQ (82 aa)) are disordered. Residues 19–48 (RSGSITSATSHPPRSNSNPKLVAKHQQQLY) show a composition bias toward polar residues. Positions 58–77 (EQQNQQPQQQQQKQTSNQSE) are enriched in low complexity. N6-(pyridoxal phosphate)lysine is present on K763. Polar residues predominate over residues 962 to 981 (VISGGDKTNNTLKPKQTTKG). The interval 962–993 (VISGGDKTNNTLKPKQTTKGFNIGGQPGNPTN) is disordered. Positions 983-993 (NIGGQPGNPTN) are enriched in gly residues.

The protein belongs to the glycogen phosphorylase family. As to quaternary structure, homodimer. Requires pyridoxal 5'-phosphate as cofactor. Post-translationally, the N-terminus is blocked. Enzyme activity requires processing of the 113 kDa peptide to an enzymatically active 106 kDa form of the protein. Processing would occur near the middle of the Gln-rich repetitive element.

It carries out the reaction [(1-&gt;4)-alpha-D-glucosyl](n) + phosphate = [(1-&gt;4)-alpha-D-glucosyl](n-1) + alpha-D-glucose 1-phosphate. In terms of biological role, phosphorylase is an important allosteric enzyme in carbohydrate metabolism. Enzymes from different sources differ in their regulatory mechanisms and in their natural substrates. However, all known phosphorylases share catalytic and structural properties. This Dictyostelium discoideum (Social amoeba) protein is Glycogen phosphorylase 2 (glpD).